Here is a 335-residue protein sequence, read N- to C-terminus: DNA-directed RNA polymerase subunit alpha (335 aa).

Residues 1–233 form an alpha N-terminal domain (alpha-NTD) region; it reads MIRDEISVSI…DLFIPFLHGE (233 aa). Residues 264–335 form an alpha C-terminal domain (alpha-CTD) region; it reads KEKIAFQLIF…KLFAIDPPRN (72 aa).

Belongs to the RNA polymerase alpha chain family. In terms of assembly, in plastids the minimal PEP RNA polymerase catalytic core is composed of four subunits: alpha, beta, beta', and beta''. When a (nuclear-encoded) sigma factor is associated with the core the holoenzyme is formed, which can initiate transcription.

It is found in the plastid. Its subcellular location is the chloroplast. The catalysed reaction is RNA(n) + a ribonucleoside 5'-triphosphate = RNA(n+1) + diphosphate. In terms of biological role, DNA-dependent RNA polymerase catalyzes the transcription of DNA into RNA using the four ribonucleoside triphosphates as substrates. This is DNA-directed RNA polymerase subunit alpha from Pinus thunbergii (Japanese black pine).